Reading from the N-terminus, the 306-residue chain is 3-methyl-2-oxobutanoate hydroxymethyltransferase (306 aa).

Residues Asp-53 and Asp-96 each coordinate Mg(2+). 3-methyl-2-oxobutanoate contacts are provided by residues 53 to 54, Asp-96, and Lys-126; that span reads DS. Glu-128 is a Mg(2+) binding site. The active-site Proton acceptor is the Glu-195.

The protein belongs to the PanB family. As to quaternary structure, homodecamer; pentamer of dimers. Requires Mg(2+) as cofactor.

The protein resides in the cytoplasm. It carries out the reaction 3-methyl-2-oxobutanoate + (6R)-5,10-methylene-5,6,7,8-tetrahydrofolate + H2O = 2-dehydropantoate + (6S)-5,6,7,8-tetrahydrofolate. It functions in the pathway cofactor biosynthesis; (R)-pantothenate biosynthesis; (R)-pantoate from 3-methyl-2-oxobutanoate: step 1/2. Functionally, catalyzes the reversible reaction in which hydroxymethyl group from 5,10-methylenetetrahydrofolate is transferred onto alpha-ketoisovalerate to form ketopantoate. This chain is 3-methyl-2-oxobutanoate hydroxymethyltransferase, found in Anaeromyxobacter dehalogenans (strain 2CP-1 / ATCC BAA-258).